The following is a 347-amino-acid chain: NADH-ubiquinone oxidoreductase chain 2 (347 aa).

9 consecutive transmembrane segments (helical) span residues 1–21 (MNPFVSVIIYTTIILGTMIVM), 59–79 (YFMTQATASMLLMLAVIINLL), 93–115 (TASMIMTMALAMKLGLSPFHFWV), 149–169 (INPNLILTMSMLSILVGGWGG), 178–198 (IMAYSSIAHMGWMAAILIYNP), 201–221 (TILNLTIYLMTTFTMFTMFAL), 239–259 (IITTLMLTILLSMGGLPPLTG), 274–294 (DSIILPTLMAIMALLNLYFYM), and 325–345 (LLPTMIILSTMLLPLTPMLVV).

This sequence belongs to the complex I subunit 2 family. As to quaternary structure, core subunit of respiratory chain NADH dehydrogenase (Complex I) which is composed of 45 different subunits. Interacts with TMEM242.

The protein resides in the mitochondrion inner membrane. The enzyme catalyses a ubiquinone + NADH + 5 H(+)(in) = a ubiquinol + NAD(+) + 4 H(+)(out). In terms of biological role, core subunit of the mitochondrial membrane respiratory chain NADH dehydrogenase (Complex I) which catalyzes electron transfer from NADH through the respiratory chain, using ubiquinone as an electron acceptor. Essential for the catalytic activity and assembly of complex I. The sequence is that of NADH-ubiquinone oxidoreductase chain 2 from Hippopotamus amphibius (Hippopotamus).